Here is a 311-residue protein sequence, read N- to C-terminus: Small ribosomal subunit biogenesis GTPase RsgA (311 aa).

The 159-residue stretch at 88 to 246 (SKEKEQVIAA…VIDTPGIREF (159 aa)) folds into the CP-type G domain. GTP-binding positions include 137–140 (NKID) and 188–196 (GHSGVGKST). Residues C270, C275, H277, and C283 each coordinate Zn(2+).

The protein belongs to the TRAFAC class YlqF/YawG GTPase family. RsgA subfamily. Monomer. Associates with 30S ribosomal subunit, binds 16S rRNA. Zn(2+) is required as a cofactor.

It localises to the cytoplasm. One of several proteins that assist in the late maturation steps of the functional core of the 30S ribosomal subunit. Helps release RbfA from mature subunits. May play a role in the assembly of ribosomal proteins into the subunit. Circularly permuted GTPase that catalyzes slow GTP hydrolysis, GTPase activity is stimulated by the 30S ribosomal subunit. This Chlorobaculum parvum (strain DSM 263 / NCIMB 8327) (Chlorobium vibrioforme subsp. thiosulfatophilum) protein is Small ribosomal subunit biogenesis GTPase RsgA.